The following is a 411-amino-acid chain: Serine hydroxymethyltransferase (411 aa).

(6S)-5,6,7,8-tetrahydrofolate contacts are provided by residues leucine 119 and 123–125; that span reads GHL. Lysine 228 is subject to N6-(pyridoxal phosphate)lysine. Position 351-353 (351-353) interacts with (6S)-5,6,7,8-tetrahydrofolate; sequence SPF.

Belongs to the SHMT family. As to quaternary structure, homodimer. Requires pyridoxal 5'-phosphate as cofactor.

The protein localises to the cytoplasm. The enzyme catalyses (6R)-5,10-methylene-5,6,7,8-tetrahydrofolate + glycine + H2O = (6S)-5,6,7,8-tetrahydrofolate + L-serine. Its pathway is one-carbon metabolism; tetrahydrofolate interconversion. It functions in the pathway amino-acid biosynthesis; glycine biosynthesis; glycine from L-serine: step 1/1. Its function is as follows. Catalyzes the reversible interconversion of serine and glycine with tetrahydrofolate (THF) serving as the one-carbon carrier. This reaction serves as the major source of one-carbon groups required for the biosynthesis of purines, thymidylate, methionine, and other important biomolecules. Also exhibits THF-independent aldolase activity toward beta-hydroxyamino acids, producing glycine and aldehydes, via a retro-aldol mechanism. The protein is Serine hydroxymethyltransferase of Clostridium beijerinckii (strain ATCC 51743 / NCIMB 8052) (Clostridium acetobutylicum).